We begin with the raw amino-acid sequence, 283 residues long: Protein/nucleic acid deglycase HchA (283 aa).

Residues His86, Glu91, and His123 each coordinate Zn(2+). Cys185 functions as the Nucleophile in the catalytic mechanism.

Belongs to the peptidase C56 family. HchA subfamily. In terms of assembly, homodimer.

It is found in the cytoplasm. The enzyme catalyses N(omega)-(1-hydroxy-2-oxopropyl)-L-arginyl-[protein] + H2O = lactate + L-arginyl-[protein] + H(+). It catalyses the reaction N(6)-(1-hydroxy-2-oxopropyl)-L-lysyl-[protein] + H2O = lactate + L-lysyl-[protein] + H(+). It carries out the reaction S-(1-hydroxy-2-oxopropyl)-L-cysteinyl-[protein] + H2O = lactate + L-cysteinyl-[protein] + H(+). The catalysed reaction is N(omega)-(1-hydroxy-2-oxoethyl)-L-arginyl-[protein] + H2O = L-arginyl-[protein] + glycolate + H(+). The enzyme catalyses N(6)-(1-hydroxy-2-oxoethyl)-L-lysyl-[protein] + H2O = glycolate + L-lysyl-[protein] + H(+). It catalyses the reaction S-(1-hydroxy-2-oxoethyl)-L-cysteinyl-[protein] + H2O = glycolate + L-cysteinyl-[protein] + H(+). It carries out the reaction N(2)-(1-hydroxy-2-oxopropyl)-dGTP + H2O = lactate + dGTP + H(+). The catalysed reaction is N(2)-(1-hydroxy-2-oxopropyl)-GTP + H2O = lactate + GTP + H(+). The enzyme catalyses N(2)-(1-hydroxy-2-oxopropyl)-GDP + H2O = lactate + GDP + H(+). It catalyses the reaction N(2)-(1-hydroxy-2-oxopropyl)-GMP + H2O = lactate + GMP + H(+). It carries out the reaction N(2)-(1-hydroxy-2-oxoethyl)-dGTP + H2O = dGTP + glycolate + H(+). The catalysed reaction is N(2)-(1-hydroxy-2-oxoethyl)-GTP + H2O = glycolate + GTP + H(+). The enzyme catalyses N(2)-(1-hydroxy-2-oxoethyl)-GDP + H2O = glycolate + GDP + H(+). It catalyses the reaction N(2)-(1-hydroxy-2-oxoethyl)-GMP + H2O = glycolate + GMP + H(+). It carries out the reaction an N(2)-(1-hydroxy-2-oxopropyl)-guanosine in RNA + H2O = a guanosine in RNA + lactate + H(+). The catalysed reaction is an N(2)-(1-hydroxy-2-oxopropyl)-2'-deoxyguanosine in DNA + H2O = a 2'-deoxyguanosine in DNA + lactate + H(+). The enzyme catalyses an N(2)-(1-hydroxy-2-oxoethyl)-guanosine in RNA + H2O = a guanosine in RNA + glycolate + H(+). It catalyses the reaction an N(2)-(1-hydroxy-2-oxoethyl)-2'-deoxyguanosine in DNA + H2O = a 2'-deoxyguanosine in DNA + glycolate + H(+). Its function is as follows. Protein and nucleotide deglycase that catalyzes the deglycation of the Maillard adducts formed between amino groups of proteins or nucleotides and reactive carbonyl groups of glyoxals. Thus, functions as a protein deglycase that repairs methylglyoxal- and glyoxal-glycated proteins, and releases repaired proteins and lactate or glycolate, respectively. Deglycates cysteine, arginine and lysine residues in proteins, and thus reactivates these proteins by reversing glycation by glyoxals. Acts on early glycation intermediates (hemithioacetals and aminocarbinols), preventing the formation of Schiff bases and advanced glycation endproducts (AGE). Also functions as a nucleotide deglycase able to repair glycated guanine in the free nucleotide pool (GTP, GDP, GMP, dGTP) and in DNA and RNA. Is thus involved in a major nucleotide repair system named guanine glycation repair (GG repair), dedicated to reversing methylglyoxal and glyoxal damage via nucleotide sanitization and direct nucleic acid repair. Plays an important role in protecting cells from carbonyl stress. This chain is Protein/nucleic acid deglycase HchA, found in Escherichia coli (strain K12 / MC4100 / BW2952).